The following is a 472-amino-acid chain: MSTAAVQDARKQAEALDNEDSIAFVRDEFNIPTKAQIASSRLADSHPAALPASEDDAKCIYLCGNSLGVQPKRTVTRLNQYLTTWATQGVQGHFKPLEESPLPTWLDADAKAAELIAPVVGANVSEVAVMQTLTANIHLLMSAFYRPDINGRHKIILENKAFPSDHFAVETQIRHHSLSTEKSMVLIESSSKDNIISTEEVLSVISAHADTTALLLLPGIQYYTGQLLDIPAITAFAHKHGIFVIWDLAHAVGNVPLYLHDWGVDAAAWCSYKYLNGGPGCIGGLFVHTNNSVVTKEITDEKPEEGYNNRLAGWWGNDKKTRFVMANKFHPVAGAAGFQLSNPSILDITSLSASLEIFQEAGGMEALRSKSLKLTSFLEATLGHMKEEDRAHFRIITPSKSEERGAQLSLMLSDGLLDTVMKELEARGVIVDERKPNVIRVAPAPLYNTFKDCVLFVEAFSAALEVAKQHAL.

Pyridoxal 5'-phosphate is bound by residues L133, T134, 162–165 (FPSD), D247, H250, and Y272. The residue at position 273 (K273) is an N6-(pyridoxal phosphate)lysine. Pyridoxal 5'-phosphate contacts are provided by W314 and N342.

This sequence belongs to the kynureninase family. As to quaternary structure, homodimer. It depends on pyridoxal 5'-phosphate as a cofactor.

The protein resides in the cytoplasm. It carries out the reaction L-kynurenine + H2O = anthranilate + L-alanine + H(+). It catalyses the reaction 3-hydroxy-L-kynurenine + H2O = 3-hydroxyanthranilate + L-alanine + H(+). Its pathway is amino-acid degradation; L-kynurenine degradation; L-alanine and anthranilate from L-kynurenine: step 1/1. The protein operates within cofactor biosynthesis; NAD(+) biosynthesis; quinolinate from L-kynurenine: step 2/3. Catalyzes the cleavage of L-kynurenine (L-Kyn) and L-3-hydroxykynurenine (L-3OHKyn) into anthranilic acid (AA) and 3-hydroxyanthranilic acid (3-OHAA), respectively. This Neurospora crassa (strain ATCC 24698 / 74-OR23-1A / CBS 708.71 / DSM 1257 / FGSC 987) protein is Kynureninase 2 (kyn-2).